The sequence spans 280 residues: Alpha-methyl-mannoside-specific lectin (280 aa).

A signal peptide spans 1–26; it reads MAISKKILPLLSIATIFLLLLNKAHS. A carbohydrate contacts are provided by Asp-114 and Gly-134. Mn(2+)-binding residues include Glu-156 and Asp-158. Asp-158 and Phe-160 together coordinate Ca(2+). Positions 165 and 166 each coordinate a carbohydrate. The Ca(2+) site is built by Asn-166 and Asp-169. Positions 169 and 174 each coordinate Mn(2+). A carbohydrate-binding residues include Gly-248 and Gln-250.

It belongs to the leguminous lectin family. In terms of assembly, homodimer. Glycosylated.

In terms of biological role, alpha-methyl-D-mannoside-specific lectin. Has hemagglutinating activity towards rabbit erythrocytes. Binds to cytokinins and significantly inhibits physiological effects of cytokinin activity such as cotyledon expansion and delayed leaf senescence. This Arachis hypogaea (Peanut) protein is Alpha-methyl-mannoside-specific lectin.